The primary structure comprises 164 residues: ATP synthase subunit b (164 aa).

The chain crosses the membrane as a helical span at residues glycine 6–isoleucine 26.

It belongs to the ATPase B chain family. As to quaternary structure, F-type ATPases have 2 components, F(1) - the catalytic core - and F(0) - the membrane proton channel. F(1) has five subunits: alpha(3), beta(3), gamma(1), delta(1), epsilon(1). F(0) has three main subunits: a(1), b(2) and c(10-14). The alpha and beta chains form an alternating ring which encloses part of the gamma chain. F(1) is attached to F(0) by a central stalk formed by the gamma and epsilon chains, while a peripheral stalk is formed by the delta and b chains.

The protein localises to the cell membrane. Its function is as follows. F(1)F(0) ATP synthase produces ATP from ADP in the presence of a proton or sodium gradient. F-type ATPases consist of two structural domains, F(1) containing the extramembraneous catalytic core and F(0) containing the membrane proton channel, linked together by a central stalk and a peripheral stalk. During catalysis, ATP synthesis in the catalytic domain of F(1) is coupled via a rotary mechanism of the central stalk subunits to proton translocation. Functionally, component of the F(0) channel, it forms part of the peripheral stalk, linking F(1) to F(0). The polypeptide is ATP synthase subunit b (Streptococcus pyogenes serotype M3 (strain ATCC BAA-595 / MGAS315)).